Reading from the N-terminus, the 85-residue chain is U4-theraphotoxin-Hhn1a (85 aa).

Positions 1 to 22 (MKVTLISILTCAAVLVLHTTAA) are cleaved as a signal peptide. A propeptide spanning residues 23-48 (EELEAESQLMEVGMPDTELAAVDEER) is cleaved from the precursor. 3 cysteine pairs are disulfide-bonded: cysteine 52-cysteine 66, cysteine 56-cysteine 77, and cysteine 71-cysteine 82.

It belongs to the neurotoxin 12 (Hwtx-2) family. 02 (Hwtx-2) subfamily. As to quaternary structure, monomer. As to expression, expressed by the venom gland.

It is found in the secreted. Functionally, neurotoxin active on both insects and mammals. The protein is U4-theraphotoxin-Hhn1a of Cyriopagopus hainanus (Chinese bird spider).